A 705-amino-acid chain; its full sequence is Ovotransferrin (705 aa).

A signal peptide spans 1 to 19; that stretch reads MKLILCTVLSLGIAAVCFA. 2 consecutive Transferrin-like domains span residues 26-352 and 364-689; these read IRWC…SMRK and IQWC…SLKT. Disulfide bonds link Cys-29–Cys-64 and Cys-39–Cys-55. Residues Asp-79 and Tyr-111 each contribute to the Fe(3+) site. 4 disulfide bridges follow: Cys-134–Cys-216, Cys-179–Cys-193, Cys-190–Cys-201, and Cys-247–Cys-261. Residues Thr-136, Arg-140, Ala-142, and Gly-143 each contribute to the hydrogencarbonate site. Position 210 (Tyr-210) interacts with Fe(3+). Residue His-269 participates in Fe(3+) binding. A connecting region region spans residues 352 to 360; it reads KDQLTPSPR. Intrachain disulfides connect Cys-367-Cys-399 and Cys-377-Cys-390. Fe(3+)-binding residues include Asp-414 and Tyr-450. 7 cysteine pairs are disulfide-bonded: Cys-424–Cys-699, Cys-440–Cys-662, Cys-473–Cys-549, Cys-497–Cys-690, Cys-507–Cys-521, Cys-518–Cys-532, and Cys-589–Cys-603. Hydrogencarbonate is bound by residues Thr-475, Arg-479, Ala-481, and Gly-482. A glycan (N-linked (GlcNAc...) asparagine) is linked at Asn-492. Tyr-543 provides a ligand contact to Fe(3+). His-611 serves as a coordination point for Fe(3+).

This sequence belongs to the transferrin family. In terms of assembly, monomer. Post-translationally, different forms of hen transferrin are distinguished by their carbohydrate composition. Ovotransferrin and embryo serum transferrin but not adult serum transferrin, have bisecting N-acetylglucosamine. Transferrin secreted by embryo hepatocytes in primary culture is marked by the presence of (alpha1-6) fucosylation of the core N-acetylglucosamine. Serum transferrins also differ in the number of attached neuraminic acid residues. In both embryo forms, sialylation occurs on the Man (alpha 1-3)-linked antennae. In terms of tissue distribution, expressed in the magnum of the oviduct (at protein level).

The protein resides in the secreted. In terms of biological role, transferrins are iron binding transport proteins which can bind two Fe(3+) ions in association with the binding of an anion, usually bicarbonate. Responsible for the transport of iron from sites of absorption and heme degradation to those of storage and utilization. There are two forms of hen transferrin, ovotransferrin, found in the ovoducts and, serum transferrin, secreted by the liver. Serum transferrin may also have a role in stimulating cell proliferation and is regulated by iron levels. Ovotransferrin has a bacteriostatic function and, is not controlled by iron levels. This is Ovotransferrin from Gallus gallus (Chicken).